Consider the following 295-residue polypeptide: Protease HtpX (295 aa).

2 consecutive transmembrane segments (helical) span residues Ile-4–Leu-24 and Gly-34–Ser-54. Position 139 (His-139) interacts with Zn(2+). Glu-140 is a catalytic residue. His-143 is a binding site for Zn(2+). A run of 2 helical transmembrane segments spans residues Gly-147–Ser-167 and Ile-194–Ile-214. Glu-223 contacts Zn(2+).

It belongs to the peptidase M48B family. The cofactor is Zn(2+).

Its subcellular location is the cell inner membrane. In Photorhabdus laumondii subsp. laumondii (strain DSM 15139 / CIP 105565 / TT01) (Photorhabdus luminescens subsp. laumondii), this protein is Protease HtpX.